The chain runs to 243 residues: 2-C-methyl-D-erythritol 4-phosphate cytidylyltransferase (243 aa).

The protein belongs to the IspD/TarI cytidylyltransferase family. IspD subfamily.

The enzyme catalyses 2-C-methyl-D-erythritol 4-phosphate + CTP + H(+) = 4-CDP-2-C-methyl-D-erythritol + diphosphate. It functions in the pathway isoprenoid biosynthesis; isopentenyl diphosphate biosynthesis via DXP pathway; isopentenyl diphosphate from 1-deoxy-D-xylulose 5-phosphate: step 2/6. Its function is as follows. Catalyzes the formation of 4-diphosphocytidyl-2-C-methyl-D-erythritol from CTP and 2-C-methyl-D-erythritol 4-phosphate (MEP). The sequence is that of 2-C-methyl-D-erythritol 4-phosphate cytidylyltransferase from Colwellia psychrerythraea (strain 34H / ATCC BAA-681) (Vibrio psychroerythus).